A 190-amino-acid polypeptide reads, in one-letter code: Crossover junction endodeoxyribonuclease RuvC (190 aa).

Active-site residues include D8, E67, and D139. 3 residues coordinate Mg(2+): D8, E67, and D139.

It belongs to the RuvC family. In terms of assembly, homodimer which binds Holliday junction (HJ) DNA. The HJ becomes 2-fold symmetrical on binding to RuvC with unstacked arms; it has a different conformation from HJ DNA in complex with RuvA. In the full resolvosome a probable DNA-RuvA(4)-RuvB(12)-RuvC(2) complex forms which resolves the HJ. It depends on Mg(2+) as a cofactor.

Its subcellular location is the cytoplasm. The enzyme catalyses Endonucleolytic cleavage at a junction such as a reciprocal single-stranded crossover between two homologous DNA duplexes (Holliday junction).. Functionally, the RuvA-RuvB-RuvC complex processes Holliday junction (HJ) DNA during genetic recombination and DNA repair. Endonuclease that resolves HJ intermediates. Cleaves cruciform DNA by making single-stranded nicks across the HJ at symmetrical positions within the homologous arms, yielding a 5'-phosphate and a 3'-hydroxyl group; requires a central core of homology in the junction. The consensus cleavage sequence is 5'-(A/T)TT(C/G)-3'. Cleavage occurs on the 3'-side of the TT dinucleotide at the point of strand exchange. HJ branch migration catalyzed by RuvA-RuvB allows RuvC to scan DNA until it finds its consensus sequence, where it cleaves and resolves the cruciform DNA. The chain is Crossover junction endodeoxyribonuclease RuvC from Pasteurella multocida (strain Pm70).